We begin with the raw amino-acid sequence, 154 residues long: Myoglobin (154 aa).

One can recognise a Globin domain in the interval 2 to 148 (GLSDGEWQLV…FRNDMAAKYK (147 aa)). The residue at position 4 (Ser4) is a Phosphoserine. Nitrite is bound at residue His65. His65 contributes to the O2 binding site. Thr68 bears the Phosphothreonine mark. His94 serves as a coordination point for heme b.

Belongs to the globin family. As to quaternary structure, monomeric.

It is found in the cytoplasm. Its subcellular location is the sarcoplasm. It carries out the reaction Fe(III)-heme b-[protein] + nitric oxide + H2O = Fe(II)-heme b-[protein] + nitrite + 2 H(+). The catalysed reaction is H2O2 + AH2 = A + 2 H2O. Its function is as follows. Monomeric heme protein which primary function is to store oxygen and facilitate its diffusion within muscle tissues. Reversibly binds oxygen through a pentacoordinated heme iron and enables its timely and efficient release as needed during periods of heightened demand. Depending on the oxidative conditions of tissues and cells, and in addition to its ability to bind oxygen, it also has a nitrite reductase activity whereby it regulates the production of bioactive nitric oxide. Under stress conditions, like hypoxia and anoxia, it also protects cells against reactive oxygen species thanks to its pseudoperoxidase activity. The protein is Myoglobin (MB) of Lagothrix lagotricha (Brown woolly monkey).